Consider the following 115-residue polypeptide: HTH-type transcriptional regulator SarR (115 aa).

The segment at residues 51–74 (SKEIAKCSEFKPYYLTKALQKLKD) is a DNA-binding region (H-T-H motif).

It belongs to the SarA family. In terms of assembly, homodimer.

The protein localises to the cytoplasm. Negative regulator of sarA transcription at late exponential and stationary growth phases. It contributes to the modulation of target genes downstream of the sarA regulatory cascade. Also, positively regulates expression of primary transcripts RNAII and RNAIII generated by agr (virulence accessory gene regulator) locus. The sequence is that of HTH-type transcriptional regulator SarR (sarR) from Staphylococcus aureus (strain NCTC 8325 / PS 47).